Consider the following 142-residue polypeptide: Large ribosomal subunit protein uL11 (142 aa).

It belongs to the universal ribosomal protein uL11 family. As to quaternary structure, part of the ribosomal stalk of the 50S ribosomal subunit. Interacts with L10 and the large rRNA to form the base of the stalk. L10 forms an elongated spine to which L12 dimers bind in a sequential fashion forming a multimeric L10(L12)X complex. Post-translationally, one or more lysine residues are methylated.

In terms of biological role, forms part of the ribosomal stalk which helps the ribosome interact with GTP-bound translation factors. The sequence is that of Large ribosomal subunit protein uL11 from Nitrobacter hamburgensis (strain DSM 10229 / NCIMB 13809 / X14).